The sequence spans 856 residues: Alginate lyase 7 (856 aa).

PbH1 repeat units lie at residues 133–155 (DYNV…DPHE), 157–179 (TINL…VADF), 180–202 (QIGA…NIVT), 204–226 (SHDI…VVQR), 234–256 (VYNV…LIKM), 257–279 (STDV…RVQG), 280–304 (VEDV…EVIV), and 320–342 (TQNV…GIQE). 9 Hemolysin-type calcium-binding repeats span residues 387-402 (GSTG…IADL), 404-421 (VGGS…NDVL), 422-439 (EGGA…ADIF), 538-549 (GTEGDDSLTGNA), 554-563 (LDGGSGNDSL), 565-581 (GGLG…DDIL), 582-599 (NGGL…ADIF), 715-731 (GGAG…DDIL), and 733-749 (GGSE…ADVF).

This sequence belongs to the D-mannuronate C5-epimerase family. Ca(2+) serves as cofactor.

Its subcellular location is the secreted. The enzyme catalyses Eliminative cleavage of alginate to give oligosaccharides with 4-deoxy-alpha-L-erythro-hex-4-enuronosyl groups at their non-reducing ends and beta-D-mannuronate at their reducing end.. It carries out the reaction [(1-&gt;4)-beta-D-mannuronosyl](n) = [alginate](n). It functions in the pathway glycan biosynthesis; alginate biosynthesis. With respect to regulation, inhibited by zinc. Converts beta-D-mannuronic acid (M) to alpha-L-guluronic acid (G). Has both epimerase and lyase activities. Contributes to abortive encystment by degrading the coat from inside the cyst. Important for cyst germination. The chain is Alginate lyase 7 from Azotobacter vinelandii.